A 309-amino-acid chain; its full sequence is Tagatose-6-phosphate kinase (309 aa).

This sequence belongs to the carbohydrate kinase PfkB family. LacC subfamily.

It carries out the reaction D-tagatofuranose 6-phosphate + ATP = D-tagatofuranose 1,6-bisphosphate + ADP + H(+). Its pathway is carbohydrate metabolism; D-tagatose 6-phosphate degradation; D-glyceraldehyde 3-phosphate and glycerone phosphate from D-tagatose 6-phosphate: step 1/2. The sequence is that of Tagatose-6-phosphate kinase from Streptococcus sanguinis (strain SK36).